We begin with the raw amino-acid sequence, 457 residues long: Multidrug resistance protein MdtK (457 aa).

12 helical membrane-spanning segments follow: residues 11-31 (LLALAIPVVIAQLSQTAMGVV), 46-66 (AVAVGTSIWLPAILFGHGLLL), 93-113 (WLAFCVSVLIMVVIYNSDHII), 127-147 (AVGFLHAIMWGAPGYLFFQVL), 160-180 (GMVIGFIGLLVNIPINYIFIY), 188-208 (LGGVGCGVATGTVYWVMFLMM), 243-263 (LPVALALFFEVTLFAVVALLV), 278-300 (LNFSSLMFMLPMSLSVAATIRVG), 316-336 (YTSIAVGLMLACVTAIFTVVF), 350-370 (VVVMASHLMLLAALYQLSDAI), 387-407 (IFFITFTAYWLLGLPSGYLLG), and 418-438 (PSGFWIGFVIGLTSAAILMAL).

This sequence belongs to the multi antimicrobial extrusion (MATE) (TC 2.A.66.1) family. MdtK subfamily.

It localises to the cell inner membrane. In terms of biological role, multidrug efflux pump that functions probably as a Na(+)/drug antiporter. The polypeptide is Multidrug resistance protein MdtK (Yersinia enterocolitica serotype O:8 / biotype 1B (strain NCTC 13174 / 8081)).